Consider the following 171-residue polypeptide: MTAILVTGYRSFELGIFSEKDKRVAIIKKAIERDLIAYLEEGVDWFIFTGNLGFEQWALEVANDLKKTYPLKTATIFAFETHGSTWNDRNQQQLQQFRETDFVKYSYPSYESPKQLKSYHHFLIHNTDGAYLFYDSEHETRLSYLVAAMKEQPCYPLSFLNFERLNDIADE.

Belongs to the UPF0398 family.

The sequence is that of UPF0398 protein SEQ_1788 from Streptococcus equi subsp. equi (strain 4047).